A 153-amino-acid polypeptide reads, in one-letter code: Nucleoside diphosphate kinase (153 aa).

ATP is bound by residues lysine 13, phenylalanine 61, arginine 89, threonine 95, arginine 106, and asparagine 116. Histidine 119 (pros-phosphohistidine intermediate) is an active-site residue.

This sequence belongs to the NDK family. Requires Mg(2+) as cofactor. As to expression, highest levels in the liver and kidney with lower levels in the heart, brain and breast muscle.

It localises to the cytoplasm. The protein resides in the cell membrane. It catalyses the reaction a 2'-deoxyribonucleoside 5'-diphosphate + ATP = a 2'-deoxyribonucleoside 5'-triphosphate + ADP. It carries out the reaction a ribonucleoside 5'-diphosphate + ATP = a ribonucleoside 5'-triphosphate + ADP. Functionally, major role in the synthesis of nucleoside triphosphates other than ATP. The ATP gamma phosphate is transferred to the NDP beta phosphate via a ping-pong mechanism, using a phosphorylated active-site intermediate. The sequence is that of Nucleoside diphosphate kinase from Columba livia (Rock dove).